The following is a 511-amino-acid chain: GATA zinc finger domain-containing protein 15 (511 aa).

Over residues 1 to 111 the composition is skewed to low complexity; it reads TNNNNFNNIN…FNDNCNNNSN (111 aa). Disordered regions lie at residues 1 to 194, 214 to 313, and 325 to 355; these read TNNN…NTFF, NVNN…NENK, and NLQY…VLSP. Positions 124-135 are enriched in polar residues; the sequence is SLQNINQYPLSP. A compositionally biased stretch (low complexity) spans 136 to 166; the sequence is NNNKSSNQHLSHSSSNVNSQYYQTPYYQPSQ. Over residues 167–185 the composition is skewed to polar residues; the sequence is KQNSPNSTPPLNGCQYENH. 2 stretches are compositionally biased toward low complexity: residues 214–309 and 337–351; these read NVNN…NNDN and SGST…PTSP. Residues 453 to 478 form a GATA-type zinc finger; the sequence is CQACGTRASPEWRKGPDGFKSLCNAC.

The protein is GATA zinc finger domain-containing protein 15 (gtaO) of Dictyostelium discoideum (Social amoeba).